A 462-amino-acid chain; its full sequence is L-seryl-tRNA(Sec) selenium transferase (462 aa).

K292 bears the N6-(pyridoxal phosphate)lysine mark.

Belongs to the SelA family. The cofactor is pyridoxal 5'-phosphate.

Its subcellular location is the cytoplasm. The catalysed reaction is L-seryl-tRNA(Sec) + selenophosphate + H(+) = L-selenocysteinyl-tRNA(Sec) + phosphate. Its pathway is aminoacyl-tRNA biosynthesis; selenocysteinyl-tRNA(Sec) biosynthesis; selenocysteinyl-tRNA(Sec) from L-seryl-tRNA(Sec) (bacterial route): step 1/1. Its function is as follows. Converts seryl-tRNA(Sec) to selenocysteinyl-tRNA(Sec) required for selenoprotein biosynthesis. In Geobacter sulfurreducens (strain ATCC 51573 / DSM 12127 / PCA), this protein is L-seryl-tRNA(Sec) selenium transferase.